We begin with the raw amino-acid sequence, 734 residues long: Protein arginine N-methyltransferase 5 (734 aa).

The span at 1–16 shows a compositional bias: polar residues; the sequence is MSNRTYADNLFPQQVA. A disordered region spans residues 1 to 39; that stretch reads MSNRTYADNLFPQQVAEQHEEQMSSGSSPKSNSPSRSIS. Residues 24 to 39 are compositionally biased toward low complexity; the sequence is SSGSSPKSNSPSRSIS. The tract at residues 42–329 is TIM barrel; that stretch reads EAANSRIHIG…EYSQALRHAV (288 aa). The 347-residue stretch at 360 to 706 folds into the SAM-dependent MTase PRMT-type domain; that stretch reads LQAPLQPLSE…VDNTGVWYEW (347 aa). An S-adenosyl-L-methionine-binding site is contributed by tyrosine 376. Phenylalanine 379 contacts a protein. S-adenosyl-L-methionine is bound by residues 385–386, glutamate 450, and 477–478; these read KY and DM. A protein-binding residues include glutamate 499 and glutamate 508. Active-site proton donor/acceptor residues include glutamate 499 and glutamate 508. The interval 529–734 is beta barrel; sequence PQKYTSYVKP…PNGESYYMRM (206 aa). The tract at residues 541–589 is dimerization; sequence STHIHQTIKAQSIPYLSRAIPSHGRGEPELDEDEMWIQKYPQGHVRNNM.

Belongs to the class I-like SAM-binding methyltransferase superfamily. Protein arginine N-methyltransferase family. Homodimer. Interacts with cep-1 (via C-terminus domain); does not methylate cep-1. Interacts with cbp-1 (via N-terminus domain and HAT domain); the interaction results in methylation of cbp-1. Component of a complex that contains cep-1 and cbp-1. May interact with pid-2, pid-4 and pid-5.

The protein localises to the nucleus. The enzyme catalyses L-arginyl-[protein] + 2 S-adenosyl-L-methionine = N(omega),N(omega)'-dimethyl-L-arginyl-[protein] + 2 S-adenosyl-L-homocysteine + 2 H(+). Catalyzes the symmetrical dimethylation of arginine residues in targets such as small nuclear ribonucleoproteins, histone H2A/H4 and cbp-1. Dimethylation occurs in a distributive manner where the protein is released after the addition of the first methyl group prior to rebinding for the addition of the second methyl group. Plays a role in the negative regulation of DNA damage-induced apoptosis. By methylating cbp-1, may prevent apoptosis by repressing the capacity of cbp-1 to enhance cep-1 dependent transcription activation of the programmed cell death activator egl-1. Plays a role in heat and oxidative stress resistance. This chain is Protein arginine N-methyltransferase 5, found in Caenorhabditis elegans.